A 242-amino-acid polypeptide reads, in one-letter code: MILLSLYLCLAAMLHQSEGEASPKLPGLMTSNPDQQTEITDKHNNLRRIVEPTASNMLKMTWSNKIAQNAQRSANQCTLEHTSKEERTIDGVECGENLFFSSAPYTWSYAIQNWFDERKYFRFNYGPTAQNVMIGHYTQVVWYRSYELGCAIAYCPDQPTYKYYQVCQYCPGGNIRSRKYTPYSIGPPCGDCPDACDNGLCTNPCKQNDVYNNCPDLKKQVGCGHPIMKDCMATCKCLTEIK.

An N-terminal signal peptide occupies residues 1-19 (MILLSLYLCLAAMLHQSEG). The SCP domain maps to 41-169 (DKHNNLRRIV…TYKYYQVCQY (129 aa)). 8 disulfide bridges follow: Cys77-Cys155, Cys94-Cys170, Cys150-Cys167, Cys189-Cys196, Cys192-Cys201, Cys205-Cys237, Cys214-Cys231, and Cys223-Cys235. The 33-residue stretch at 205–237 (CKQNDVYNNCPDLKKQVGCGHPIMKDCMATCKC) folds into the ShKT domain.

This sequence belongs to the CRISP family. As to expression, expressed by the venom gland.

Its subcellular location is the secreted. In terms of biological role, alters a variety of ion channel activities, including voltage-gated potassium channels (Kv), voltage-gated calcium channels (L-, N-, and P-type) (Cav) and ryanodine receptors (RyR). Is toxic to mice (causes lethargy, partial paralysis of rear limbs and lowering of body temperature). The protein is Cysteine-rich venom protein helothermine of Heloderma horridum horridum (Mexican beaded lizard).